A 509-amino-acid polypeptide reads, in one-letter code: Lengsin (509 aa).

A disordered region spans residues 1 to 34 (MNNEEDLLQEDSTRDEGNETEANSMNTLRRTRKK). Positions 83 to 177 (NRLQFVRFEA…VICDTFTVTG (95 aa)) constitute a GS beta-grasp domain. The GS catalytic domain occupies 184-509 (PRYIAKRQLS…ERNKFLEYFI (326 aa)).

Belongs to the glutamine synthetase family. As to quaternary structure, dodecamer. Interacts with BFSP2 and VIM. Abundantly expressed in lens.

In terms of biological role, may act as a component of the cytoskeleton or as a chaperone for the reorganization of intermediate filament proteins during terminal differentiation in the lens. Does not seem to have enzymatic activity. In Homo sapiens (Human), this protein is Lengsin (LGSN).